We begin with the raw amino-acid sequence, 356 residues long: Phosphoserine aminotransferase (356 aa).

An L-glutamate-binding site is contributed by R41. Pyridoxal 5'-phosphate-binding positions include 75-76, W99, T147, D166, and Q189; that span reads AS. An N6-(pyridoxal phosphate)lysine modification is found at K190. Pyridoxal 5'-phosphate is bound at residue 231-232; that stretch reads NT.

This sequence belongs to the class-V pyridoxal-phosphate-dependent aminotransferase family. SerC subfamily. Homodimer. Pyridoxal 5'-phosphate is required as a cofactor.

It localises to the cytoplasm. It carries out the reaction O-phospho-L-serine + 2-oxoglutarate = 3-phosphooxypyruvate + L-glutamate. It catalyses the reaction 4-(phosphooxy)-L-threonine + 2-oxoglutarate = (R)-3-hydroxy-2-oxo-4-phosphooxybutanoate + L-glutamate. Its pathway is amino-acid biosynthesis; L-serine biosynthesis; L-serine from 3-phospho-D-glycerate: step 2/3. It participates in cofactor biosynthesis; pyridoxine 5'-phosphate biosynthesis; pyridoxine 5'-phosphate from D-erythrose 4-phosphate: step 3/5. Catalyzes the reversible conversion of 3-phosphohydroxypyruvate to phosphoserine and of 3-hydroxy-2-oxo-4-phosphonooxybutanoate to phosphohydroxythreonine. This chain is Phosphoserine aminotransferase, found in Phocaeicola vulgatus (strain ATCC 8482 / DSM 1447 / JCM 5826 / CCUG 4940 / NBRC 14291 / NCTC 11154) (Bacteroides vulgatus).